Here is a 183-residue protein sequence, read N- to C-terminus: Caltractin ICL1f (183 aa).

Positions 1–19 (MARRGQQPPQQQQQAQPAQ) are enriched in low complexity. The interval 1 to 30 (MARRGQQPPQQQQQAQPAQKNQAGKFNPAE) is disordered. EF-hand domains are found at residues 39 to 74 (EEVLEIKEAFDLFDTDGTQSIDPKELKAAMTSLGFE), 75 to 110 (AKNQTIYQMISDLDTDGSGQIDFAEFLKLMTARISE), 112 to 147 (DSKADIQKVFNLFDSERAGFITLKDLRKVAKELGET), and 148 to 183 (MDDSELQEMIDRADSDGDTQVTFEDFYNIMTKKTFA). D52, D54, T56, S58, E63, D88, D90, S92, Q94, and E99 together coordinate Ca(2+).

It belongs to the centrin family. Monomer.

The protein localises to the cytoplasm. The protein resides in the cytoskeleton. Functionally, plays a fundamental role in microtubule organizing center structure and function. Component of the infraciliary lattice (ICL) and the ciliary basal bodies. This is Caltractin ICL1f (Icl1f) from Paramecium tetraurelia.